A 366-amino-acid polypeptide reads, in one-letter code: GTP-binding protein 10 (366 aa).

One can recognise an Obg domain in the interval Gly-13–Ile-148. Positions Ala-149–Asp-344 constitute an OBG-type G domain. GTP contacts are provided by residues Gly-155 to Ser-162, Asp-202 to Leu-206, and Asn-278 to Asp-281. Residues Gln-346–Arg-355 are compositionally biased toward basic and acidic residues. Residues Gln-346–Ser-366 are disordered.

Belongs to the TRAFAC class OBG-HflX-like GTPase superfamily. OBG GTPase family.

The protein localises to the nucleus. It localises to the nucleolus. Its function is as follows. May be involved in the ribosome maturation process. This is GTP-binding protein 10 (Gtpbp10) from Mus musculus (Mouse).